A 149-amino-acid polypeptide reads, in one-letter code: Dehydrin Rab15 (149 aa).

The segment at 1–149 (MEFQGQHDNP…KIKEKLPGQH (149 aa)) is disordered. Basic and acidic residues predominate over residues 78-93 (KEKIKEKLPGGHKDNQ). Over residues 100-117 (TGTGGAYGPGTGTGGAYG) the composition is skewed to gly residues. Positions 132 to 149 (GEKKGIMDKIKEKLPGQH) are enriched in basic and acidic residues.

The protein belongs to the plant dehydrin family.

The polypeptide is Dehydrin Rab15 (RAB15) (Triticum aestivum (Wheat)).